Reading from the N-terminus, the 179-residue chain is Large ribosomal subunit protein uL5 (179 aa).

Belongs to the universal ribosomal protein uL5 family. As to quaternary structure, part of the 50S ribosomal subunit; part of the 5S rRNA/L5/L18/L25 subcomplex. Contacts the 5S rRNA and the P site tRNA. Forms a bridge to the 30S subunit in the 70S ribosome.

Functionally, this is one of the proteins that bind and probably mediate the attachment of the 5S RNA into the large ribosomal subunit, where it forms part of the central protuberance. In the 70S ribosome it contacts protein S13 of the 30S subunit (bridge B1b), connecting the 2 subunits; this bridge is implicated in subunit movement. Contacts the P site tRNA; the 5S rRNA and some of its associated proteins might help stabilize positioning of ribosome-bound tRNAs. This Shewanella putrefaciens (strain CN-32 / ATCC BAA-453) protein is Large ribosomal subunit protein uL5.